A 515-amino-acid chain; its full sequence is 2,3-bisphosphoglycerate-independent phosphoglycerate mutase (515 aa).

Mn(2+) contacts are provided by Asp-14 and Ser-64. Ser-64 serves as the catalytic Phosphoserine intermediate. Residues His-125, 155-156, Arg-187, Arg-193, 263-266, and Lys-337 each bind substrate; these read RD and RADR. 5 residues coordinate Mn(2+): Asp-404, His-408, Asp-445, His-446, and His-464.

The protein belongs to the BPG-independent phosphoglycerate mutase family. Monomer. Mn(2+) is required as a cofactor.

The catalysed reaction is (2R)-2-phosphoglycerate = (2R)-3-phosphoglycerate. It functions in the pathway carbohydrate degradation; glycolysis; pyruvate from D-glyceraldehyde 3-phosphate: step 3/5. In terms of biological role, catalyzes the interconversion of 2-phosphoglycerate and 3-phosphoglycerate. The sequence is that of 2,3-bisphosphoglycerate-independent phosphoglycerate mutase from Yersinia pseudotuberculosis serotype O:1b (strain IP 31758).